A 364-amino-acid polypeptide reads, in one-letter code: Leucine dehydrogenase (364 aa).

The active site involves lysine 80. 180 to 186 (GVGNVAY) contacts NAD(+).

The protein belongs to the Glu/Leu/Phe/Val dehydrogenases family.

It catalyses the reaction L-leucine + NAD(+) + H2O = 4-methyl-2-oxopentanoate + NH4(+) + NADH + H(+). Its pathway is amino-acid degradation; L-leucine degradation; 4-methyl-2-oxopentanoate from L-leucine (dehydrogenase route): step 1/1. Functionally, catalyzes the reversible deamination of L-leucine to 4-methyl-2-oxopentanoate. This is Leucine dehydrogenase (yqiT) from Bacillus subtilis (strain 168).